A 190-amino-acid polypeptide reads, in one-letter code: Putative manganese efflux pump MntP (190 aa).

The next 6 helical transmembrane spans lie at 3 to 23 (PISLLFLALAMSTDAFAAALG), 41 to 61 (LIFGAIETITPVIGWGIGQVA), 69 to 89 (DHWIAFTLLLVLGLHMIYNGL), 105 to 125 (FWILAVTAFATSIDALAVGVG), 133 to 153 (IMVAALAIGLATTVMVTIGVM), and 168 to 188 (IVGGIVLIVVGTTILYEHLTA).

This sequence belongs to the MntP (TC 9.B.29) family.

The protein localises to the cell inner membrane. Probably functions as a manganese efflux pump. The protein is Putative manganese efflux pump MntP of Pseudomonas syringae pv. tomato (strain ATCC BAA-871 / DC3000).